Consider the following 198-residue polypeptide: Ribonuclease HII (198 aa).

The RNase H type-2 domain occupies 10 to 198 (QLVAGVDEVG…PVKRALGLAS (189 aa)). Asp-16, Glu-17, and Asp-108 together coordinate a divalent metal cation.

The protein belongs to the RNase HII family. It depends on Mn(2+) as a cofactor. Mg(2+) serves as cofactor.

The protein localises to the cytoplasm. The enzyme catalyses Endonucleolytic cleavage to 5'-phosphomonoester.. Its function is as follows. Endonuclease that specifically degrades the RNA of RNA-DNA hybrids. The chain is Ribonuclease HII from Shigella boydii serotype 4 (strain Sb227).